The primary structure comprises 539 residues: Phosphoenolpyruvate carboxykinase (ATP) (539 aa).

The substrate site is built by R64, Y206, and K212. ATP contacts are provided by residues K212, H231, and 247–255 (GLSGTGKTT). Mn(2+)-binding residues include K212 and H231. Mn(2+) is bound at residue D268. Residues E296, R332, 448-449 (RI), and T454 contribute to the ATP site. R332 serves as a coordination point for substrate.

Belongs to the phosphoenolpyruvate carboxykinase (ATP) family. Monomer. Requires Mn(2+) as cofactor.

It is found in the cytoplasm. The enzyme catalyses oxaloacetate + ATP = phosphoenolpyruvate + ADP + CO2. It functions in the pathway carbohydrate biosynthesis; gluconeogenesis. Its function is as follows. Involved in the gluconeogenesis. Catalyzes the conversion of oxaloacetate (OAA) to phosphoenolpyruvate (PEP) through direct phosphoryl transfer between the nucleoside triphosphate and OAA. This is Phosphoenolpyruvate carboxykinase (ATP) from Cronobacter sakazakii (strain ATCC BAA-894) (Enterobacter sakazakii).